Reading from the N-terminus, the 577-residue chain is Guanine nucleotide-binding protein-like 3-like protein (577 aa).

Residues 1–30 (MMKIRHKNKKPGKGSKGCKKPARQNGKKVT) are compositionally biased toward basic residues. The tract at residues 1-75 (MMKIRHKNKK…VAREQERQRH (75 aa)) is disordered. Residues 9-28 (KKPGKGSKGCKKPARQNGKK) form a required for nucleolar localization region. Residues 42 to 75 (GNDHASREAELKKKRVEEMREKQQVAREQERQRH) show a composition bias toward basic and acidic residues. A coiled-coil region spans residues 43–103 (NDHASREAEL…QKEEVLQELN (61 aa)). The 187-residue stretch at 118 to 304 (YKEFRKVVEY…LLDAPGIVPG (187 aa)) folds into the CP-type G domain. Residues 166–169 (NKID), 253–260 (GLPNVGKS), and 297–300 (DAPG) each bind GTP.

It belongs to the TRAFAC class YlqF/YawG GTPase family. In terms of assembly, interacts with MDM2; this interaction, which occurs in the nucleoplasm, stabilizes MDM2. Indirectly interacts with TP53, via MDM2-binding. Interacts with TERF1; this interaction probably occurs in the nucleoplasm and is increased during mitosis, when the nucleolus is disassembled. This binding may promote TERF1 homodimerization. Interacts with TERT.

Its subcellular location is the nucleus. The protein resides in the nucleolus. Functionally, stabilizes TERF1 telomeric association by preventing TERF1 recruitment by PML. Stabilizes TERF1 protein by preventing its ubiquitination and hence proteasomal degradation. Does so by interfering with TERF1-binding to FBXO4 E3 ubiquitin-protein ligase. Required for cell proliferation. By stabilizing TRF1 protein during mitosis, promotes metaphase-to-anaphase transition. Stabilizes MDM2 protein by preventing its ubiquitination, and hence proteasomal degradation. By acting on MDM2, may affect TP53 activity. Required for normal processing of ribosomal pre-rRNA. Binds GTP. The polypeptide is Guanine nucleotide-binding protein-like 3-like protein (Gnl3l) (Mus musculus (Mouse)).